The following is a 212-amino-acid chain: Ropporin-1 (212 aa).

The RIIa domain maps to 12–43; that stretch reads PELPELLKQFTKDAIRTQPPDLIQWAAEYFGA. The residue at position 56 (serine 56) is a Phosphoserine. The tract at residues 209–212 is interaction with RHPN1; it reads VRLE.

This sequence belongs to the ropporin family. In terms of assembly, homodimer. Interacts with AKAP3. May interact with SPA17. Interacts with RHPN1. Interacts with FSCB; the interaction increases upon spermatozoa capacitation conditions. Interacts with CFAP61. Post-translationally, sumoylated, sumoylation decreases upon spermatozoa capacitation conditions. As to expression, testis-specific. Present in the most inner parts of seminiferous tubules (at protein level).

It localises to the cell projection. The protein resides in the cilium. It is found in the flagellum. Important for male fertility. With ROPN1L, involved in fibrous sheath integrity and sperm motility, plays a role in PKA-dependent signaling processes required for spermatozoa capacitation. The protein is Ropporin-1 (Ropn1) of Mus musculus (Mouse).